Reading from the N-terminus, the 67-residue chain is DNA gyrase inhibitor YacG (67 aa).

Zn(2+)-binding residues include C10, C13, C29, and C33. Residues 44–57 (EEKRIPSSGDRSDT) show a composition bias toward basic and acidic residues. Residues 44 to 67 (EEKRIPSSGDRSDTDGWSEEENQP) are disordered.

Belongs to the DNA gyrase inhibitor YacG family. As to quaternary structure, interacts with GyrB. The cofactor is Zn(2+).

Its function is as follows. Inhibits all the catalytic activities of DNA gyrase by preventing its interaction with DNA. Acts by binding directly to the C-terminal domain of GyrB, which probably disrupts DNA binding by the gyrase. The chain is DNA gyrase inhibitor YacG from Cronobacter sakazakii (strain ATCC BAA-894) (Enterobacter sakazakii).